Consider the following 502-residue polypeptide: Maturase K (502 aa).

The protein belongs to the intron maturase 2 family. MatK subfamily.

It localises to the plastid. The protein resides in the chloroplast. Its function is as follows. Usually encoded in the trnK tRNA gene intron. Probably assists in splicing its own and other chloroplast group II introns. The protein is Maturase K of Vaccinium vitis-idaea (Mountain cranberry).